The primary structure comprises 147 residues: Small ribosomal subunit protein bS6m (147 aa).

This sequence belongs to the bacterial ribosomal protein bS6 family. Component of the mitochondrial ribosome small subunit (28S) which comprises a 12S rRNA and about 30 distinct proteins.

The protein localises to the mitochondrion. The sequence is that of Small ribosomal subunit protein bS6m (mRpS6) from Drosophila melanogaster (Fruit fly).